A 137-amino-acid chain; its full sequence is Gonadotropin subunit beta-1 (137 aa).

Positions 1-24 (MYCTHLKTLQLVVMATLWVTPVRA) are cleaved as a signal peptide. Cystine bridges form between cysteine 32-cysteine 78, cysteine 46-cysteine 93, cysteine 55-cysteine 108, cysteine 59-cysteine 110, and cysteine 113-cysteine 120. An N-linked (GlcNAc...) asparagine glycan is attached at asparagine 36.

The protein belongs to the glycoprotein hormones subunit beta family. In terms of assembly, heterodimer of an alpha and a beta chain.

Its subcellular location is the secreted. In terms of biological role, involved in gametogenesis and steroidogenesis. This is Gonadotropin subunit beta-1 (cgba) from Oncorhynchus masou (Cherry salmon).